A 769-amino-acid polypeptide reads, in one-letter code: Serine/threonine-protein kinase PLK4 (769 aa).

The Protein kinase domain occupies 10 to 263 (YEVYEILGKG…LDQVLQHPFM (254 aa)). ATP is bound by residues 16 to 24 (LGKGGFASV) and lysine 39. Aspartate 134 acts as the Proton acceptor in catalysis. Disordered regions lie at residues 280–304 (SSDS…SSYG), 337–380 (PQQR…LDIP), and 592–651 (APLT…VLSS). Positions 337 to 371 (PQQRPQSASHNKPTSDFFSGISNDPRTMAPSSPTK) are enriched in polar residues. In terms of domain architecture, Cryptic POLO box 1 (CPB1) spans 374–491 (KKRLDIPPLN…ARFVQMVKAK (118 aa)). The Cryptic POLO box 2 (CPB2) domain maps to 492–595 (TPKITYYSEK…GRRPANAPLT (104 aa)). A compositionally biased stretch (polar residues) spans 605–648 (TKENQLYSNISSPNTPQTPHQMPSFAMSTASHTSAGNPLTQRPV). The POLO box domain maps to 662-745 (AMKKCTIAGV…MPAILRELNA (84 aa)).

This sequence belongs to the protein kinase superfamily. Ser/Thr protein kinase family. CDC5/Polo subfamily. Homodimer. In terms of processing, ubiquitinated; leading to its degradation by the proteasome.

Its subcellular location is the cytoplasm. It is found in the cytoskeleton. The protein resides in the microtubule organizing center. It localises to the centrosome. The protein localises to the centriole. It carries out the reaction L-seryl-[protein] + ATP = O-phospho-L-seryl-[protein] + ADP + H(+). It catalyses the reaction L-threonyl-[protein] + ATP = O-phospho-L-threonyl-[protein] + ADP + H(+). Serine/threonine-protein kinase that plays a central role in centriole duplication. Able to trigger procentriole formation on the surface of the mother centriole cylinder, leading to the recruitment of centriole biogenesis proteins. When overexpressed, it is able to induce centrosome amplification through the simultaneous generation of multiple procentrioles adjoining each parental centriole during S phase. This chain is Serine/threonine-protein kinase PLK4 (SAK), found in Aedes aegypti (Yellowfever mosquito).